The primary structure comprises 777 residues: Subtilisin-like protease SBT3.7 (777 aa).

Residues 1–22 (MRNHRTSIFVVLSLVIILNGQS) form the signal peptide. A propeptide spans 23–113 (GFLPRAGAES…VIPDRFYKPA (91 aa)) (activation peptide). One can recognise an Inhibitor I9 domain in the interval 34–111 (VHIVYLGEKQ…VHVIPDRFYK (78 aa)). In terms of domain architecture, Peptidase S8 spans 117-624 (TWDYLGLSPT…GGLVNPEKAT (508 aa)). A glycan (N-linked (GlcNAc...) asparagine) is linked at N133. D147 serves as the catalytic Charge relay system. 2 N-linked (GlcNAc...) asparagine glycosylation sites follow: N180 and N206. Residue H222 is the Charge relay system of the active site. Residues N237, N397, N412, and N540 are each glycosylated (N-linked (GlcNAc...) asparagine). In terms of domain architecture, PA spans 386-481 (SLVYPENPGN…ELGTYILFYI (96 aa)). S555 functions as the Charge relay system in the catalytic mechanism. N647, N723, and N758 each carry an N-linked (GlcNAc...) asparagine glycan.

Belongs to the peptidase S8 family.

Its subcellular location is the secreted. This chain is Subtilisin-like protease SBT3.7, found in Arabidopsis thaliana (Mouse-ear cress).